A 221-amino-acid polypeptide reads, in one-letter code: 5'-nucleotidase (221 aa).

Aspartate 14 serves as the catalytic Nucleophile.

Belongs to the HAD-like hydrolase superfamily. The cofactor is Mn(2+). Requires Mg(2+) as cofactor.

It carries out the reaction a ribonucleoside 5'-phosphate + H2O = a ribonucleoside + phosphate. Its function is as follows. Specifically dephosphorylates nucleoside 5'-monophosphates to nucleosides and inorganic phosphate. Displays high activity toward 5'-UMP and 5'-IMP, significant activity against 5'-XMP and 5'-TMP, and low activity against 5'-CMP. This chain is 5'-nucleotidase, found in Pseudomonas aeruginosa (strain ATCC 15692 / DSM 22644 / CIP 104116 / JCM 14847 / LMG 12228 / 1C / PRS 101 / PAO1).